Here is a 106-residue protein sequence, read N- to C-terminus: MALDPADQHLRHVEKDVLIPKIMREKAKERCSEQVQDFTKCCKNSGVLMVVKCRKENSALKECLTAYYNDPAFYEECKMEYLKEREEFRKTGIPTKKRLQKLPTSM.

N-acetylalanine is present on alanine 2. The region spanning 28–71 (KERCSEQVQDFTKCCKNSGVLMVVKCRKENSALKECLTAYYNDP) is the CHCH domain. 2 short sequence motifs (cx9C motif) span residues 31 to 41 (CSEQVQDFTKC) and 53 to 63 (CRKENSALKEC). Intrachain disulfides connect cysteine 31/cysteine 63 and cysteine 41/cysteine 53.

The protein belongs to the CMC family. In terms of assembly, component of the MITRAC (mitochondrial translation regulation assembly intermediate of cytochrome c oxidase complex) complex, the core components of this complex being COA3/MITRAC12 and COX14.

The protein localises to the mitochondrion. Its function is as follows. Component of the MITRAC (mitochondrial translation regulation assembly intermediate of cytochrome c oxidase complex) complex, that regulates cytochrome c oxidase assembly. This is COX assembly mitochondrial protein homolog (CMC1) from Homo sapiens (Human).